We begin with the raw amino-acid sequence, 1544 residues long: Lysophospholipase NTE1 (1544 aa).

The Cytoplasmic portion of the chain corresponds to 1–37; that stretch reads MSTIEIVSTVAEYTEIHSPVSSKFLLPSARDSSSSIS. A helical membrane pass occupies residues 38–58; that stretch reads LFSAIFWFWSWLFFKIMNIFL. The Lumenal portion of the chain corresponds to 59–76; the sequence is YYIPNIIVNLFSVNFQIT. Residues 77–97 traverse the membrane as a helical segment; the sequence is LSLSSIVITLTGIISFCFLIV. At 98-1544 the chain is on the cytoplasmic side; the sequence is RYKYLTRYSK…RKSLYRRSSI (1447 aa). Disordered stretches follow at residues 265 to 312 and 424 to 552; these read RLFS…RNYP and ESPS…EETE. Over residues 275 to 310 the composition is skewed to polar residues; sequence NPASNPLSPDNTGSKSFDPLSSGNFNDTSLSSSDRN. Over residues 425–447 the composition is skewed to low complexity; the sequence is SPSVSINKTSSSSSSLPKKSTTS. 2 stretches are compositionally biased toward polar residues: residues 448–458 and 517–536; these read LRPLNRNQSSR and QISSNGGPTLKGHSSSTTKF. Positions 537 to 546 are enriched in basic and acidic residues; sequence ENIRDRTFSD. A nucleoside 3',5'-cyclic phosphate is bound by residues 681–811 and 807–960; these read SFES…LKSL and KLKS…VANK. The 165-residue stretch at 1237-1401 folds into the PNPLA domain; sequence LVLGGGGSRG…LDNLPVMEMK (165 aa). The GXGXXG signature appears at 1241 to 1246; it reads GGGSRG. A GXSXG motif is present at residues 1268–1272; sequence GTSIG. Ser1270 acts as the Nucleophile in catalysis. Asp1388 acts as the Proton acceptor in catalysis. The DGA/G signature appears at 1388–1390; it reads DGG.

This sequence belongs to the NTE family.

The protein localises to the endoplasmic reticulum membrane. It carries out the reaction a 1-acyl-sn-glycero-3-phosphocholine + H2O = sn-glycerol 3-phosphocholine + a fatty acid + H(+). Inhibited by organophosphorus esters. Its function is as follows. Intracellular phospholipase B that catalyzes the double deacylation of phosphatidylcholine (PC) to glycerophosphocholine (GroPCho). Plays an important role in membrane lipid homeostasis. Responsible for the rapid PC turnover in response to inositol, elevated temperatures, or when choline is present in the growth medium. This chain is Lysophospholipase NTE1 (NTE1), found in Debaryomyces hansenii (strain ATCC 36239 / CBS 767 / BCRC 21394 / JCM 1990 / NBRC 0083 / IGC 2968) (Yeast).